The primary structure comprises 182 residues: tRNA-splicing endonuclease (182 aa).

Active-site residues include Tyr-119, His-127, and Lys-158.

This sequence belongs to the tRNA-intron endonuclease family. Archaeal short subfamily. As to quaternary structure, homotetramer; although the tetramer contains four active sites, only two participate in the cleavage. Therefore, it should be considered as a dimer of dimers.

The enzyme catalyses pretRNA = a 3'-half-tRNA molecule with a 5'-OH end + a 5'-half-tRNA molecule with a 2',3'-cyclic phosphate end + an intron with a 2',3'-cyclic phosphate and a 5'-hydroxyl terminus.. Endonuclease that removes tRNA introns. Cleaves pre-tRNA at the 5'- and 3'-splice sites to release the intron. The products are an intron and two tRNA half-molecules bearing 2',3' cyclic phosphate and 5'-OH termini. Recognizes a pseudosymmetric substrate in which 2 bulged loops of 3 bases are separated by a stem of 4 bp. This Saccharolobus islandicus (strain M.14.25 / Kamchatka #1) (Sulfolobus islandicus) protein is tRNA-splicing endonuclease.